We begin with the raw amino-acid sequence, 198 residues long: Recombination protein RecR (198 aa).

The C4-type zinc finger occupies 57–72; it reads CSVCGHITDRDPCYIC. Residues 80 to 175 form the Toprim domain; it reads SVVCVVQEPK…KVTRIAHGLP (96 aa).

The protein belongs to the RecR family.

In terms of biological role, may play a role in DNA repair. It seems to be involved in an RecBC-independent recombinational process of DNA repair. It may act with RecF and RecO. The polypeptide is Recombination protein RecR (Bacillus thuringiensis (strain Al Hakam)).